An 87-amino-acid polypeptide reads, in one-letter code: HssA/B-like protein 8 (87 aa).

Positions 1–22 (MSILSALTSISNPMKSTKSSVA) are enriched in polar residues. The disordered stretch occupies residues 1-24 (MSILSALTSISNPMKSTKSSVANG).

The protein belongs to the hssA/B family.

This Dictyostelium discoideum (Social amoeba) protein is HssA/B-like protein 8 (hssl8).